A 405-amino-acid polypeptide reads, in one-letter code: Syndecan-3 (405 aa).

Residues 1 to 22 (MPAELRRLAVLLLLLSARAALA) form the signal peptide. The Extracellular segment spans residues 23 to 347 (QPWRNENYER…PQKNILERKE (325 aa)). The segment at 31 to 59 (ERPVDLEGSGDDDPFGDDELDDIYSGSGS) is disordered. Residues 38–52 (GSGDDDPFGDDELDD) are compositionally biased toward acidic residues. O-linked (Xyl...) (glycosaminoglycan) serine glycosylation is found at S39, S55, S57, S59, and S66. Disordered regions lie at residues 134–159 (TTTA…ATTT) and 191–301 (TRAT…ELGN). A compositionally biased stretch (low complexity) spans 191–201 (TRATTLETPTT). Positions 202 to 237 (SIPETSVLTEVTTSRLVPSSTAKPRSLPKPSTSRTA) are enriched in polar residues. O-linked (Xyl...) (glycosaminoglycan) serine glycosylation is found at S280, S283, and S330. The helical transmembrane segment at 348-372 (VLIAVIVGGVVGALFAAFLVMLLIY) threads the bilayer. Over 373-405 (RMKKKDEGSYTLEEPKQANVTYQKPDKQEEFYA) the chain is Cytoplasmic.

It belongs to the syndecan proteoglycan family. Post-translationally, O-glycosylated within the Thr/Ser-rich region which could interact with lectin domains on other molecules. In terms of tissue distribution, proximal chondrogenic central core of embryonic limb buds where cartilage differentiation is being initiated.

It localises to the membrane. Functionally, cell surface proteoglycan that may bear both heparan sulfate and chondroitin sulfate. The multiple functional domains provide potential sites for mediating the adhesive cell-matrix interactions and cytoskeletal reorganization involved in limb chondrogenesis. Interaction with other matrix ligands as well as phosphorylation and shedding of the ectodomain might be involved in cell shape changes that occur during chondrogenesis. Furthermore, shedding of the ectodomain might break the adhesive interactions that promoted condensation, thus facilitating the deposition of cartilage matrix molecules. The chain is Syndecan-3 (SDC3) from Gallus gallus (Chicken).